Consider the following 134-residue polypeptide: MAEKFDNLEEHLEKFVENIRQLGIIVSDFQPSSQTGLNQKLNFMITGLQDIEKCRQQLHDINVPLEVFEYIDQGRNPQLYTKECLERALAKNEQVKGKIDTLTKFKSLLISELGKVFPEEMAKYKAIHGDDPPS.

Belongs to the Mediator complex subunit 10 family. In terms of assembly, component of the Mediator complex.

Its subcellular location is the nucleus. Component of the Mediator complex, a coactivator involved in the regulated transcription of nearly all RNA polymerase II-dependent genes. Mediator functions as a bridge to convey information from gene-specific regulatory proteins to the basal RNA polymerase II transcription machinery. Mediator is recruited to promoters by direct interactions with regulatory proteins and serves as a scaffold for the assembly of a functional preinitiation complex with RNA polymerase II and the general transcription factors. Negatively regulates the Wnt signaling pathway and positively regulates the Nodal signaling pathway. Required for cardiac cushion formation. The protein is Mediator of RNA polymerase II transcription subunit 10 (med10) of Danio rerio (Zebrafish).